Consider the following 206-residue polypeptide: Probable GTP-binding protein EngB (206 aa).

In terms of domain architecture, EngB-type G spans 23–195 (DLLEIAFVGR…WARIEAIMAE (173 aa)). GTP is bound by residues 31–38 (GRSNVGKS), 58–62 (GRTQL), 76–79 (DLPG), 143–146 (TKCD), and 174–176 (FSA). Mg(2+) is bound by residues Ser-38 and Thr-60.

The protein belongs to the TRAFAC class TrmE-Era-EngA-EngB-Septin-like GTPase superfamily. EngB GTPase family. Mg(2+) serves as cofactor.

Its function is as follows. Necessary for normal cell division and for the maintenance of normal septation. This is Probable GTP-binding protein EngB from Geobacter sulfurreducens (strain ATCC 51573 / DSM 12127 / PCA).